A 633-amino-acid polypeptide reads, in one-letter code: tRNA uridine 5-carboxymethylaminomethyl modification enzyme MnmG (633 aa).

FAD is bound by residues 15 to 20 (GAGHAG), isoleucine 127, and serine 182. Residue 276-290 (GPRYCPSIEDKIVRF) participates in NAD(+) binding. Glutamine 373 contributes to the FAD binding site.

This sequence belongs to the MnmG family. In terms of assembly, homodimer. Heterotetramer of two MnmE and two MnmG subunits. FAD is required as a cofactor.

The protein localises to the cytoplasm. In terms of biological role, NAD-binding protein involved in the addition of a carboxymethylaminomethyl (cmnm) group at the wobble position (U34) of certain tRNAs, forming tRNA-cmnm(5)s(2)U34. This chain is tRNA uridine 5-carboxymethylaminomethyl modification enzyme MnmG, found in Streptococcus agalactiae serotype Ia (strain ATCC 27591 / A909 / CDC SS700).